The primary structure comprises 383 residues: Non-structural maintenance of chromosomes element 4 homolog B (383 aa).

Residues 1–22 (MRNSVKWETELTGDRSRRREAD) are compositionally biased toward basic and acidic residues. Disordered stretches follow at residues 1-59 (MRNS…EQGI), 198-231 (MKQR…EKKS), and 355-383 (QGSV…NGGL). The span at 201–212 (RKSRVGNRKRTK) shows a compositional bias: basic residues. A compositionally biased stretch (polar residues) spans 355–372 (QGSVIQEETVVEDSSNME).

It belongs to the NSE4 family. As to quaternary structure, interacts with SMC5, SMC6A or SMC6B. The SMC5-SMC6 complex is composed of the SMC5 and SMC6 heterodimer attached via their hinge domain and from the non-SMC subunit NSE4A or NSE4B. Not expressed in seedlings, rosette leaves and floral buds.

It is found in the nucleus. Functionally, component of the SMC5-SMC6 complex, that promotes sister chromatid alignment after DNA damage and facilitates double-stranded DNA breaks (DSBs) repair via homologous recombination between sister chromatids. In Arabidopsis thaliana (Mouse-ear cress), this protein is Non-structural maintenance of chromosomes element 4 homolog B (NSE4B).